The primary structure comprises 142 residues: Translation initiation factor 2 subunit beta (142 aa).

This sequence belongs to the eIF-2-beta/eIF-5 family. As to quaternary structure, heterotrimer composed of an alpha, a beta and a gamma chain.

EIF-2 functions in the early steps of protein synthesis by forming a ternary complex with GTP and initiator tRNA. The sequence is that of Translation initiation factor 2 subunit beta from Thermococcus gammatolerans (strain DSM 15229 / JCM 11827 / EJ3).